We begin with the raw amino-acid sequence, 78 residues long: Major outer membrane lipoprotein Lpp (78 aa).

The N-terminal stretch at 1–20 (MNRTKLVLGAVILGSTLLAG) is a signal peptide. A lipid anchor (N-palmitoyl cysteine) is attached at C21. The S-diacylglycerol cysteine moiety is linked to residue C21. 2 repeats span residues 24 to 34 (NAKIDQLSSDV) and 38 to 48 (NAKVDQLSNDV). Residues 27–75 (IDQLSSDVQTLNAKVDQLSNDVNAIRSDVQAAKDDAARANQRLDNQVRT) are a coiled coil. Position 78 is an N6-murein peptidoglycan lysine (K78).

Belongs to the Lpp family. Homotrimer.

It localises to the cell outer membrane. The protein resides in the secreted. The protein localises to the cell wall. Its function is as follows. A highly abundant outer membrane lipoprotein that controls the distance between the inner and outer membranes. The only protein known to be covalently linked to the peptidoglycan network (PGN). Also non-covalently binds the PGN. The link between the cell outer membrane and PGN contributes to maintenance of the structural and functional integrity of the cell envelope, and maintains the correct distance between the PGN and the outer membrane. This chain is Major outer membrane lipoprotein Lpp, found in Pectobacterium atrosepticum (strain SCRI 1043 / ATCC BAA-672) (Erwinia carotovora subsp. atroseptica).